Consider the following 630-residue polypeptide: Long-chain-fatty-acid--AMP ligase FadD32 (630 aa).

ATP-binding positions include 187-192 (TSGSTR), Ser342, Ala346, Asp469, and Arg483.

The protein belongs to the ATP-dependent AMP-binding enzyme family. In terms of assembly, monomer.

It catalyses the reaction a long-chain fatty acid + holo-[ACP] + ATP = a long-chain fatty acyl-[ACP] + AMP + diphosphate. The enzyme catalyses decanoate + ATP + H(+) = decanoyl-AMP + diphosphate. The catalysed reaction is dodecanoate + ATP + H(+) = dodecanoyl-AMP + diphosphate. It carries out the reaction tetradecanoate + ATP + H(+) = tetradecanoyl-AMP + diphosphate. The protein operates within lipid metabolism; mycolic acid biosynthesis. Its activity is regulated as follows. The acyl-AMP ligase activity is inhibited by the alkylphosphate ester of AMP, adenosine 50-dodecylphosphate (AMPC12). Also inhibited by eicosyl-AMP (AMPC20). In terms of biological role, involved in the biosynthesis of mycolic acids. Catalyzes the activation of long-chain fatty acids as acyl-adenylates (acyl-AMP), which are then transferred to the phosphopantetheine arm of the polyketide synthase Pks13 for further chain extension. Can use decanoate (C10), dodecanoate (C12) and tetradecanoate (C14). The protein is Long-chain-fatty-acid--AMP ligase FadD32 of Mycolicibacterium smegmatis (strain ATCC 700084 / mc(2)155) (Mycobacterium smegmatis).